Consider the following 717-residue polypeptide: MNVPVGHLRNVQVLGIDAGGTMTDTFFVDQDGDFVVGKAQSTPQNEALGLIASSEDGLANWGMSLHEALAQLQTGVYSGTAMLNRVVQRKGLKCGLIVNRGMEDFHRMGRAVQSHLGYAYEDRIHLNTHRYDPPLVPRHLTRGVVERTDMIGTQVIPLREDTARDAARDLIAADAEGIVISLLHSYKNPENERRVRDIVLEEVEKSGKKIPVFASADYYPVRKETHRTNTTILEGYAAEPSRQTLSKISNAFKERGTKFDFRVMATHGGTISWKAKELARTIVSGPIGGVIGAKYLGEVLGYKNIACSDIGGTSFDVALITQGEMTIKNDPDMARLVLSLPLVAMDSVGAGAGSFIRLDPYTRAIKLGPDSAGYRVGVCWKESGIETVTISDCHMVLGYLNPDNFLGGAVKLDRQRSVDAIKAQIADPLGLSVEDAAAGVIELLDSDLRDYLRSMISGKGYSPASFVCFSYGGAGPVHTYGYTEGLGFEDVIVPAWAAGFSAFGCAAADFEYRYDKSLDINMPTETPDTDKEKAAATLQAAWEELTKNVLEEFKLNGYSADQVTLQPGYRMQYRGQLNDLEIESPLAQAHTAADWDQLTDAFNATYGRVYAASARSPELGYSVTGAIMRGMVPIPKPKIPKEPEEGETPPESAKIGTRKFYRKKRWVDAQLYHMESLRPGNRVMGPAVIESDATTFVVPDGFETWLDGHRLFHLREV.

As to quaternary structure, heterohexamer of two alpha, two beta and two gamma subunits. It depends on Fe cation as a cofactor. The cofactor is Mg(2+). Requires Zn(2+) as cofactor. Post-translationally, the N-terminus is blocked.

It catalyses the reaction acetone + hydrogencarbonate + 2 ATP + 3 H2O = acetoacetate + 2 AMP + 4 phosphate + 4 H(+). Its function is as follows. Catalyzes the carboxylation of acetone to form acetoacetate. Has a reduced activity on butanone, and no activity on 2-pentatone, 3-pentatone, 2-hexanone, chloroacetone, pyruvate, phosphoenolpyruvate, acetaldehyde, propionaldehyde and propylene oxide. This chain is Acetone carboxylase beta subunit, found in Xanthobacter autotrophicus (strain ATCC BAA-1158 / Py2).